Reading from the N-terminus, the 374-residue chain is MPLLTTPYAELDLIRQPEQANDPLQAFDAADEYLLAQLHDQAPDANCRVLVLNDSFGALAASLAGQLQVVSSGDSHLGHLALEKNLARNGLPFDSVPFVPASEHWQGPFDRVLVRVPKTLALLEEQLIRLQGQLAPGAQVIAGAMIKHLPRAAGDLMEKYIGPVQASLALKKARLLTATVAERPLAKSPYPSCYRLDAPALDLVNHANVFCREGLDIGTRAFLPHLPRNLGRARVADLGCGNGVLAIASALANPEAEYTLVDESYMAVQSAQENWLAALGERPATFLAADGLAGLEKQSLDVVLCNPPFHQQQVVGDFLAWRMFQQAREALVVGGALYIVGNRHLGYHSKLARLFRGVEQVAATPKFVILKARK.

This sequence belongs to the methyltransferase superfamily. RlmG family.

The protein resides in the cytoplasm. The catalysed reaction is guanosine(1835) in 23S rRNA + S-adenosyl-L-methionine = N(2)-methylguanosine(1835) in 23S rRNA + S-adenosyl-L-homocysteine + H(+). Specifically methylates the guanine in position 1835 (m2G1835) of 23S rRNA. The protein is Ribosomal RNA large subunit methyltransferase G of Pseudomonas putida (strain ATCC 47054 / DSM 6125 / CFBP 8728 / NCIMB 11950 / KT2440).